A 191-amino-acid polypeptide reads, in one-letter code: UPF0228 protein MM_1428 (191 aa).

It belongs to the UPF0228 family.

This Methanosarcina mazei (strain ATCC BAA-159 / DSM 3647 / Goe1 / Go1 / JCM 11833 / OCM 88) (Methanosarcina frisia) protein is UPF0228 protein MM_1428.